Here is a 340-residue protein sequence, read N- to C-terminus: MGEMEQLRQEAEQLKKQIADARKACADITLAELVSGLEVVGRVQMRTRRTLRGHLAKIYAMHWATDSKLLVSASQDGKLIVWDTYTTNKVHAIPLRSSWVMTCAYAPSGNFVACGGLDNMCSIYNLKSREGNVKVSRELSAHTGYLSCCRFLDDNNIVTSSGDTTCALWDIETGQQKTVFVGHTGDCMSLAVSPDYKLFISGACDASAKLWDVREGTCRQTFTGHESDINAICFFPNGEAICTGSDDASCRLFDLRADQELTAYSQESIICGITSVAFSLSGRLLFAGYDDFNCNVWDSLKCERVGILSGHDNRVSCLGVTADGMAVATGSWDSFLKIWN.

7 WD repeats span residues 53-83, 95-125, 141-170, 182-212, 224-254, 268-298, and 310-340; these read GHLA…IVWD, LRSS…SIYN, AHTG…ALWD, GHTG…KLWD, GHES…RLFD, SIIC…NVWD, and GHDN…KIWN.

This sequence belongs to the WD repeat G protein beta family. As to quaternary structure, g proteins are composed of 3 units, alpha, beta and gamma. Interacts with RASD2.

In terms of biological role, guanine nucleotide-binding proteins (G proteins) are involved as a modulator or transducer in various transmembrane signaling systems. The beta and gamma chains are required for the GTPase activity, for replacement of GDP by GTP, and for G protein-effector interaction. The polypeptide is Guanine nucleotide-binding protein G(I)/G(S)/G(T) subunit beta-3 (Gnb3) (Mus musculus (Mouse)).